We begin with the raw amino-acid sequence, 85 residues long: Antibacterial factor-related peptide 2 (85 aa).

An N-terminal signal peptide occupies residues 1–17 (MFVRSLFLALLLATIVA). Residues 82–85 (IKRG) constitute a propeptide that is removed on maturation.

As to expression, expressed in the pharynx (at protein level). Detected in pharyngeal neurons and secretory cells.

The protein localises to the secreted. Exhibits antimicrobial activity against the Gram-positive bacteria B.subtilis IFO 3134, K.varians MAFF 118076 and S.aureus ATCC 6538P, the Gram-negative bacteria A.tumefaciens MAFF 1001, B.bacteriovorus MAFF 106101 and K.pneumoniae MAFF 519002, and the yeasts C.krusei MAFF 114085, K.thermotolerans MAFF 113848 and T.delbrueckii MAFF 113811. The sequence is that of Antibacterial factor-related peptide 2 from Caenorhabditis elegans.